Consider the following 334-residue polypeptide: Holliday junction branch migration complex subunit RuvB (334 aa).

A large ATPase domain (RuvB-L) region spans residues 4–186 (ADRLIAPENP…FGITQRLEYY (183 aa)). ATP is bound by residues Ile25, Arg26, Gly67, Lys70, Thr71, Thr72, 133-135 (EDY), Arg176, Tyr186, and Arg223. Thr71 is a Mg(2+) binding site. The interval 187–257 (KIPDLQNIVQ…TADKALNMLD (71 aa)) is small ATPAse domain (RuvB-S). A head domain (RuvB-H) region spans residues 260–334 (SKGFDYMDRK…RAYLHFGIEK (75 aa)). Positions 315 and 320 each coordinate DNA.

This sequence belongs to the RuvB family. In terms of assembly, homohexamer. Forms an RuvA(8)-RuvB(12)-Holliday junction (HJ) complex. HJ DNA is sandwiched between 2 RuvA tetramers; dsDNA enters through RuvA and exits via RuvB. An RuvB hexamer assembles on each DNA strand where it exits the tetramer. Each RuvB hexamer is contacted by two RuvA subunits (via domain III) on 2 adjacent RuvB subunits; this complex drives branch migration. In the full resolvosome a probable DNA-RuvA(4)-RuvB(12)-RuvC(2) complex forms which resolves the HJ.

Its subcellular location is the cytoplasm. The enzyme catalyses ATP + H2O = ADP + phosphate + H(+). In terms of biological role, the RuvA-RuvB-RuvC complex processes Holliday junction (HJ) DNA during genetic recombination and DNA repair, while the RuvA-RuvB complex plays an important role in the rescue of blocked DNA replication forks via replication fork reversal (RFR). RuvA specifically binds to HJ cruciform DNA, conferring on it an open structure. The RuvB hexamer acts as an ATP-dependent pump, pulling dsDNA into and through the RuvAB complex. RuvB forms 2 homohexamers on either side of HJ DNA bound by 1 or 2 RuvA tetramers; 4 subunits per hexamer contact DNA at a time. Coordinated motions by a converter formed by DNA-disengaged RuvB subunits stimulates ATP hydrolysis and nucleotide exchange. Immobilization of the converter enables RuvB to convert the ATP-contained energy into a lever motion, pulling 2 nucleotides of DNA out of the RuvA tetramer per ATP hydrolyzed, thus driving DNA branch migration. The RuvB motors rotate together with the DNA substrate, which together with the progressing nucleotide cycle form the mechanistic basis for DNA recombination by continuous HJ branch migration. Branch migration allows RuvC to scan DNA until it finds its consensus sequence, where it cleaves and resolves cruciform DNA. In Vibrio vulnificus (strain YJ016), this protein is Holliday junction branch migration complex subunit RuvB.